Here is a 275-residue protein sequence, read N- to C-terminus: Esterase AAEL000016 (275 aa).

Positions 1-21 (MMANETAAKSTKSSPTPAVEP) are disordered. Residues 7-16 (AAKSTKSSPT) are compositionally biased toward polar residues. Residues Ser-129, Asp-187, and His-214 each act as charge relay system in the active site. Residues 253–275 (LVDDSGPAGNGVHDDDDDDDDSD) form a disordered region. Over residues 266–275 (DDDDDDDDSD) the composition is skewed to acidic residues.

The protein belongs to the LovG family.

The protein is Esterase AAEL000016 of Aedes aegypti (Yellowfever mosquito).